A 632-amino-acid chain; its full sequence is MSDSFTVSLRPIREKRDRPDSLPREIAQINAQWGSFRELSEAKLREMIEEDKHKDHWEEDDEGDKESTDLETSEQLDQLYKRRAEIIQYALQAHMEASFALDFVSLLLSKHQPRQAETSMSPFLKSAAPLGSLNSEVVNPPPRPDSTLKDIKSVARGWRLQNFNSAADKLLNAGSRLETEVNSETKYWNEVLAVKEKGWKICRLPRESQALGVQYGFLEATPIFRDRGLAALRRTDDGSLFLDKGLIPLKSQGVRVRVRRGDRIVGCSKVCRPPQDAESIESRILQARDTVFEEELFYEVMREARILGTQGVKTRQNLVQVPVSDEQEILLDLVDWDQDRDPDAADSTEQDVFADAVAHSIRILLTYAHRQNLRRRTQPPPPLAPKRRPVPEYHILRPIMAYLQHKSHIQWLESLINDLRGVLQSAGIPCDFKATQFSSIGTLQPSNQVPKVEAVAGVFLAPFLSTFSGNLVTPQSSFRIQIRTNLAVPPFGTFYELSVNLPQYPDVQPPNHVGLQDEVSAILTHVIMLDIAAAIPLQCRDTADKEAKERVSWDVDYPHHGELHFLSRNGQSRKMKISLSRQELTIETYQLNRMRGVTPGAATSPTLWQTWRADSPETRPTLSEFVAQASQP.

2 disordered regions span residues 1–21 (MSDS…RPDS) and 50–72 (EDKH…DLET). Residues 11–21 (PIREKRDRPDS) show a composition bias toward basic and acidic residues. Over residues 58-72 (EEDDEGDKESTDLET) the composition is skewed to acidic residues.

It belongs to the Mediator complex subunit 17 family. As to quaternary structure, component of the Mediator complex.

It is found in the nucleus. In terms of biological role, component of the Mediator complex, a coactivator involved in the regulated transcription of nearly all RNA polymerase II-dependent genes. Mediator functions as a bridge to convey information from gene-specific regulatory proteins to the basal RNA polymerase II transcription machinery. Mediator is recruited to promoters by direct interactions with regulatory proteins and serves as a scaffold for the assembly of a functional preinitiation complex with RNA polymerase II and the general transcription factors. This Emericella nidulans (strain FGSC A4 / ATCC 38163 / CBS 112.46 / NRRL 194 / M139) (Aspergillus nidulans) protein is Mediator of RNA polymerase II transcription subunit 17 (srb4).